A 1579-amino-acid polypeptide reads, in one-letter code: Pentafunctional AROM polypeptide (1579 aa).

The tract at residues 1 to 383 (MLVKVPILGR…YGKSAHVVSD (383 aa)) is 3-dehydroquinate synthase. Residues 40–42 (DSN), 75–78 (EANK), 106–108 (GGI), and Asp-111 each bind NAD(+). Arg-122 is a binding site for 7-phospho-2-dehydro-3-deoxy-D-arabino-heptonate. 131 to 132 (TS) is an NAD(+) binding site. 7-phospho-2-dehydro-3-deoxy-D-arabino-heptonate-binding residues include Asp-138 and Lys-144. Lys-153 lines the NAD(+) pocket. Position 154 (Asn-154) interacts with 7-phospho-2-dehydro-3-deoxy-D-arabino-heptonate. Residues 171–174 (WLQS) and Asn-182 each bind NAD(+). Glu-186 is a binding site for Zn(2+). 7-phospho-2-dehydro-3-deoxy-D-arabino-heptonate-binding positions include 186-189 (EVIK) and Lys-249. Glu-259 acts as the Proton acceptor; for 3-dehydroquinate synthase activity in catalysis. 7-phospho-2-dehydro-3-deoxy-D-arabino-heptonate-binding positions include 263-267 (RNLLN) and His-270. Position 270 (His-270) interacts with Zn(2+). His-274 (proton acceptor; for 3-dehydroquinate synthase activity) is an active-site residue. 7-phospho-2-dehydro-3-deoxy-D-arabino-heptonate is bound by residues His-286 and Lys-355. His-286 provides a ligand contact to Zn(2+). An EPSP synthase region spans residues 396–862 (VYPFNNIPRD…WDVLHTELGA (467 aa)). Cys-844 functions as the For EPSP synthase activity in the catalytic mechanism. The tract at residues 881-1071 (SVVIIGMRAA…IPTRRSAFVC (191 aa)) is shikimate kinase. 886 to 893 (GMRAAGKT) provides a ligand contact to ATP. The 3-dehydroquinase stretch occupies residues 1072-1284 (LTFENLTEYT…AAPGQLTVAE (213 aa)). Catalysis depends on His-1189, which acts as the Proton acceptor; for 3-dehydroquinate dehydratase activity. The Schiff-base intermediate with substrate; for 3-dehydroquinate dehydratase activity role is filled by Lys-1218. Residues 1297–1579 (KKDFFVVGSP…KAIYDAVTEI (283 aa)) are shikimate dehydrogenase.

The protein in the N-terminal section; belongs to the sugar phosphate cyclases superfamily. Dehydroquinate synthase family. In the 2nd section; belongs to the EPSP synthase family. It in the 3rd section; belongs to the shikimate kinase family. This sequence in the 4th section; belongs to the type-I 3-dehydroquinase family. The protein in the C-terminal section; belongs to the shikimate dehydrogenase family. As to quaternary structure, homodimer. Zn(2+) serves as cofactor.

It is found in the cytoplasm. The enzyme catalyses 7-phospho-2-dehydro-3-deoxy-D-arabino-heptonate = 3-dehydroquinate + phosphate. It catalyses the reaction 3-dehydroquinate = 3-dehydroshikimate + H2O. The catalysed reaction is shikimate + NADP(+) = 3-dehydroshikimate + NADPH + H(+). It carries out the reaction shikimate + ATP = 3-phosphoshikimate + ADP + H(+). The enzyme catalyses 3-phosphoshikimate + phosphoenolpyruvate = 5-O-(1-carboxyvinyl)-3-phosphoshikimate + phosphate. The protein operates within metabolic intermediate biosynthesis; chorismate biosynthesis; chorismate from D-erythrose 4-phosphate and phosphoenolpyruvate: step 2/7. It participates in metabolic intermediate biosynthesis; chorismate biosynthesis; chorismate from D-erythrose 4-phosphate and phosphoenolpyruvate: step 3/7. It functions in the pathway metabolic intermediate biosynthesis; chorismate biosynthesis; chorismate from D-erythrose 4-phosphate and phosphoenolpyruvate: step 4/7. Its pathway is metabolic intermediate biosynthesis; chorismate biosynthesis; chorismate from D-erythrose 4-phosphate and phosphoenolpyruvate: step 5/7. The protein operates within metabolic intermediate biosynthesis; chorismate biosynthesis; chorismate from D-erythrose 4-phosphate and phosphoenolpyruvate: step 6/7. Its function is as follows. The AROM polypeptide catalyzes 5 consecutive enzymatic reactions in prechorismate polyaromatic amino acid biosynthesis. This is Pentafunctional AROM polypeptide from Candida glabrata (strain ATCC 2001 / BCRC 20586 / JCM 3761 / NBRC 0622 / NRRL Y-65 / CBS 138) (Yeast).